A 75-amino-acid chain; its full sequence is MAERPLDVIHRSLDKDVLVILKKGFEFRGRLIGYDIHLNVVLADAEMVQDGEVVKKYGKIVIRGDNVLAISPTEE.

Positions 4–75 (RPLDVIHRSL…NVLAISPTEE (72 aa)) constitute a Sm domain.

This sequence belongs to the snRNP Sm proteins family.

The sequence is that of Putative snRNP Sm-like protein from Pyrococcus horikoshii (strain ATCC 700860 / DSM 12428 / JCM 9974 / NBRC 100139 / OT-3).